Here is a 647-residue protein sequence, read N- to C-terminus: Pumilio homolog 3 (647 aa).

Residues 1–10 (MEVKGKKKFT) are compositionally biased toward basic residues. The interval 1–123 (MEVKGKKKFT…KKKKELKQSR (123 aa)) is disordered. Residue Lys33 is modified to N6-acetyllysine. Positions 59–68 (PGKKGVKQFK) are enriched in basic residues. Positions 102-123 (SGAKKPKWDDFKKKKKELKQSR) are enriched in basic and acidic residues. The short motif at 105 to 117 (KKPKWDDFKKKKK) is the Nuclear localization signal element. Residues 142–509 (ESLRRKDCDK…VVLDKSACVL (368 aa)) enclose the PUM-HD domain. Pumilio repeat units follow at residues 176-211 (HDST…LSKA), 212-247 (KYSR…MLRH), 248-276 (SEAS…ELYG), 288-324 (PTLD…VIKH), 325-360 (SLVH…LAHT), 361-396 (HDGA…VANG), 397-434 (QYSH…IVND), 435-503 (KYGR…VVLD), 504-550 (KSAC…VAEH), 551-595 (PAGH…WASI), and 596-635 (NRGA…KSSS).

Interacts with PARP1 (via catalytic domain). As to expression, in the adult eye, expressed primarily in retinal ganglion cells and, to a lesser extent, in the pigmented cells.

It is found in the nucleus. The protein localises to the nucleolus. Its subcellular location is the nucleoplasm. The protein resides in the chromosome. Its function is as follows. Inhibits the poly(ADP-ribosyl)ation activity of PARP1 and the degradation of PARP1 by CASP3 following genotoxic stress. Binds to double-stranded RNA or DNA without sequence specificity. Involved in development of the eye and of primordial germ cells. The polypeptide is Pumilio homolog 3 (Mus musculus (Mouse)).